Reading from the N-terminus, the 100-residue chain is Large ribosomal subunit protein uL23 (100 aa).

This sequence belongs to the universal ribosomal protein uL23 family. Part of the 50S ribosomal subunit. Contacts protein L29, and trigger factor when it is bound to the ribosome.

Functionally, one of the early assembly proteins it binds 23S rRNA. One of the proteins that surrounds the polypeptide exit tunnel on the outside of the ribosome. Forms the main docking site for trigger factor binding to the ribosome. This Buchnera aphidicola subsp. Baizongia pistaciae (strain Bp) protein is Large ribosomal subunit protein uL23.